Reading from the N-terminus, the 491-residue chain is Stromelysin-3 (491 aa).

An N-terminal signal peptide occupies residues 1-35 (MARAACLLRAISRALLLPLPLLLLLLLLLPPQLMA). Positions 36 to 101 (RARPPENHRH…VLNARNRQKR (66 aa)) are cleaved as a propeptide — activation peptide. Residues 82–89 (LRCGVPDP) carry the Cysteine switch motif. Cys-84, His-168, and Asp-170 together coordinate Zn(2+). Ca(2+) is bound by residues Asp-175, Gly-176, Gly-178, and Ile-180. His-183, His-196, and His-218 together coordinate Zn(2+). Glu-219 is a catalytic residue. Residues His-222 and His-228 each coordinate Zn(2+). Residues 260-279 (YGRPQLTPTSPTPTLSSQAG) are disordered. Low complexity predominate over residues 263–277 (PQLTPTSPTPTLSSQ). Residues Cys-297 and Cys-483 are joined by a disulfide bond. 4 Hemopexin repeats span residues 298 to 342 (ETSF…WQGL), 343 to 385 (PSPV…KLGL), 387 to 435 (GSPV…WRGV), and 436 to 483 (PSEI…FFDC).

The protein belongs to the peptidase M10A family. The cofactor is Ca(2+). Requires Zn(2+) as cofactor. In terms of processing, the precursor is cleaved by a furin endopeptidase. As to expression, highly expressed in ovary and uterus.

The protein resides in the secreted. Its subcellular location is the extracellular space. It is found in the extracellular matrix. Its function is as follows. May play an important role in the progression of epithelial malignancies. This is Stromelysin-3 (Mmp11) from Rattus norvegicus (Rat).